The primary structure comprises 84 residues: Small ribosomal subunit protein bS20 (84 aa).

The disordered stretch occupies residues 1-28 (MPNIKSAIKRVKTAETRNSRNASQRSAM).

This sequence belongs to the bacterial ribosomal protein bS20 family.

Binds directly to 16S ribosomal RNA. The chain is Small ribosomal subunit protein bS20 from Listeria monocytogenes serotype 4b (strain CLIP80459).